Reading from the N-terminus, the 192-residue chain is Large ribosomal subunit protein bL9 (192 aa).

The segment at 172-192 is disordered; that stretch reads DALRPEDFFDPEADGVDEDEA. The span at 179-192 shows a compositional bias: acidic residues; the sequence is FFDPEADGVDEDEA.

This sequence belongs to the bacterial ribosomal protein bL9 family.

Its function is as follows. Binds to the 23S rRNA. The sequence is that of Large ribosomal subunit protein bL9 from Rhizobium johnstonii (strain DSM 114642 / LMG 32736 / 3841) (Rhizobium leguminosarum bv. viciae).